The primary structure comprises 599 residues: Proline--tRNA ligase (599 aa).

The protein belongs to the class-II aminoacyl-tRNA synthetase family. ProS type 1 subfamily. In terms of assembly, homodimer.

Its subcellular location is the cytoplasm. It catalyses the reaction tRNA(Pro) + L-proline + ATP = L-prolyl-tRNA(Pro) + AMP + diphosphate. Functionally, catalyzes the attachment of proline to tRNA(Pro) in a two-step reaction: proline is first activated by ATP to form Pro-AMP and then transferred to the acceptor end of tRNA(Pro). As ProRS can inadvertently accommodate and process non-cognate amino acids such as alanine and cysteine, to avoid such errors it has two additional distinct editing activities against alanine. One activity is designated as 'pretransfer' editing and involves the tRNA(Pro)-independent hydrolysis of activated Ala-AMP. The other activity is designated 'posttransfer' editing and involves deacylation of mischarged Ala-tRNA(Pro). The misacylated Cys-tRNA(Pro) is not edited by ProRS. This chain is Proline--tRNA ligase, found in Bifidobacterium animalis subsp. lactis (strain AD011).